A 427-amino-acid chain; its full sequence is Phosphatase PSR1 (427 aa).

2 S-palmitoyl cysteine lipidation sites follow: C9 and C10. Residues T14–N34 show a composition bias toward polar residues. The interval T14–E223 is disordered. Residues R35 to G48 are compositionally biased toward basic residues. The span at V49–N80 shows a compositional bias: polar residues. Positions K104 to K118 are enriched in basic and acidic residues. Position 110 is a phosphoserine (S110). Residues Y119–E130 are compositionally biased toward acidic residues. Positions D131–R151 are enriched in basic and acidic residues. K154 participates in a covalent cross-link: Glycyl lysine isopeptide (Lys-Gly) (interchain with G-Cter in ubiquitin). The segment covering Q155 to Q183 has biased composition (low complexity). The segment covering R184–S214 has biased composition (polar residues). Residues S253–L411 enclose the FCP1 homology domain.

In terms of assembly, interacts with WHI2.

It localises to the cell membrane. Its function is as follows. Has phosphatase activity in vitro. Involved in the response to sodium and lithium ion stress (but not to potassium or sorbitol stress) by inducing transcription of the sodium pump ENA1/PMR2. Acts through a calcineurin-independent pathway and is functionally redundant with PSR2. Also involved in the general stress response; acts together with WHI2 to activate stress response element (STRE)-mediated gene expression, possibly through dephosphorylation of MSN2. This chain is Phosphatase PSR1 (PSR1), found in Saccharomyces cerevisiae (strain ATCC 204508 / S288c) (Baker's yeast).